The sequence spans 122 residues: Small ribosomal subunit protein uS13 (122 aa).

Residues 97-122 are disordered; it reads PVRGQRTHTNARTRKGPARAIAGKKK.

It belongs to the universal ribosomal protein uS13 family. As to quaternary structure, part of the 30S ribosomal subunit. Forms a loose heterodimer with protein S19. Forms two bridges to the 50S subunit in the 70S ribosome.

Functionally, located at the top of the head of the 30S subunit, it contacts several helices of the 16S rRNA. In the 70S ribosome it contacts the 23S rRNA (bridge B1a) and protein L5 of the 50S subunit (bridge B1b), connecting the 2 subunits; these bridges are implicated in subunit movement. Contacts the tRNAs in the A and P-sites. The chain is Small ribosomal subunit protein uS13 from Bartonella bacilliformis (strain ATCC 35685 / KC583 / Herrer 020/F12,63).